A 213-amino-acid chain; its full sequence is Thiamine-phosphate synthase (213 aa).

4-amino-2-methyl-5-(diphosphooxymethyl)pyrimidine contacts are provided by residues 42 to 46 (QYREK) and aspartate 77. Mg(2+) contacts are provided by aspartate 78 and aspartate 97. 4-amino-2-methyl-5-(diphosphooxymethyl)pyrimidine is bound at residue serine 116. 142 to 144 (TIS) is a binding site for 2-[(2R,5Z)-2-carboxy-4-methylthiazol-5(2H)-ylidene]ethyl phosphate. 4-amino-2-methyl-5-(diphosphooxymethyl)pyrimidine is bound at residue lysine 145. 2-[(2R,5Z)-2-carboxy-4-methylthiazol-5(2H)-ylidene]ethyl phosphate-binding positions include glycine 173 and 193–194 (IS).

The protein belongs to the thiamine-phosphate synthase family. Mg(2+) serves as cofactor.

The enzyme catalyses 2-[(2R,5Z)-2-carboxy-4-methylthiazol-5(2H)-ylidene]ethyl phosphate + 4-amino-2-methyl-5-(diphosphooxymethyl)pyrimidine + 2 H(+) = thiamine phosphate + CO2 + diphosphate. It catalyses the reaction 2-(2-carboxy-4-methylthiazol-5-yl)ethyl phosphate + 4-amino-2-methyl-5-(diphosphooxymethyl)pyrimidine + 2 H(+) = thiamine phosphate + CO2 + diphosphate. The catalysed reaction is 4-methyl-5-(2-phosphooxyethyl)-thiazole + 4-amino-2-methyl-5-(diphosphooxymethyl)pyrimidine + H(+) = thiamine phosphate + diphosphate. It participates in cofactor biosynthesis; thiamine diphosphate biosynthesis; thiamine phosphate from 4-amino-2-methyl-5-diphosphomethylpyrimidine and 4-methyl-5-(2-phosphoethyl)-thiazole: step 1/1. Functionally, condenses 4-methyl-5-(beta-hydroxyethyl)thiazole monophosphate (THZ-P) and 2-methyl-4-amino-5-hydroxymethyl pyrimidine pyrophosphate (HMP-PP) to form thiamine monophosphate (TMP). This Limosilactobacillus fermentum (strain NBRC 3956 / LMG 18251) (Lactobacillus fermentum) protein is Thiamine-phosphate synthase.